A 419-amino-acid chain; its full sequence is Vascular endothelial growth factor C (419 aa).

The first 31 residues, 1-31 (MHLLGFFSVACSLLAAALLPGPREAPAAAAA), serve as a signal peptide directing secretion. A propeptide spans 32 to 111 (FESGLDLSDA…RTEETIKFAA (80 aa)) (or 102). 3 disulfides stabilise this stretch: Cys131-Cys173, Cys162-Cys209, and Cys166-Cys211. 3 N-linked (GlcNAc...) asparagine glycosylation sites follow: Asn175, Asn205, and Asn240. Residues 228–419 (SLPATLPQCQ…PSYWKRPQMS (192 aa)) constitute a propeptide that is removed on maturation. 4 consecutive repeat copies span residues 280-295 (CGPN…QCVC), 304-319 (CGPH…QCVC), 328-343 (CGAN…QCVC), and 347-362 (CPRN…ACEC). Residues 280-362 (CGPNKELDEE…LNPGKCACEC (83 aa)) are 4 X 16 AA repeats of C-X(10)-C-X-C-X(1,3)-C.

The protein belongs to the PDGF/VEGF growth factor family. In terms of assembly, homodimer; non-covalent and antiparallel. Interacts with FLT4/VEGFR3; the interaction is required for FLT4/VEGFR3 homodimarization and activation. Post-translationally, undergoes a complex proteolytic maturation which generates a variety of processed secreted forms with increased activity toward VEGFR-3, but only the fully processed form could activate VEGFR-2. VEGF-C first form an antiparallel homodimer linked by disulfide bonds. Before secretion, a cleavage occurs between Arg-227 and Ser-228 producing a heterotetramer. The next extracellular step of the processing removes the N-terminal propeptide. Finally the mature VEGF-C is composed mostly of two VEGF homology domains (VHDs) bound by non-covalent interactions. In terms of tissue distribution, expressed in the spleen. Expressed in the lymph node, thymus, appendix and bone marrow. Expressed in the heart, placenta, skeletal muscle, ovary and small intestine. Expressed in the prostate, testis and colon.

It localises to the secreted. Functionally, growth factor active in angiogenesis, and endothelial cell growth, stimulating their proliferation and migration and also has effects on the permeability of blood vessels. May function in angiogenesis of the venous and lymphatic vascular systems during embryogenesis, and also in the maintenance of differentiated lymphatic endothelium in adults. Binds and activates KDR/VEGFR2 and FLT4/VEGFR3 receptors. The protein is Vascular endothelial growth factor C (VEGFC) of Homo sapiens (Human).